Reading from the N-terminus, the 696-residue chain is DNA ligase (696 aa).

Residues 43 to 47 (DGEFD), 92 to 93 (SL), and Glu-122 each bind NAD(+). Lys-124 functions as the N6-AMP-lysine intermediate in the catalytic mechanism. NAD(+) contacts are provided by Arg-145, Glu-185, Lys-301, and Lys-325. Zn(2+) is bound by residues Cys-419, Cys-422, Cys-438, and Cys-444. Residues 608–696 (SIPRNLEGLS…GPDAVAESGV (89 aa)) enclose the BRCT domain.

This sequence belongs to the NAD-dependent DNA ligase family. LigA subfamily. Mg(2+) serves as cofactor. Requires Mn(2+) as cofactor.

The catalysed reaction is NAD(+) + (deoxyribonucleotide)n-3'-hydroxyl + 5'-phospho-(deoxyribonucleotide)m = (deoxyribonucleotide)n+m + AMP + beta-nicotinamide D-nucleotide.. In terms of biological role, DNA ligase that catalyzes the formation of phosphodiester linkages between 5'-phosphoryl and 3'-hydroxyl groups in double-stranded DNA using NAD as a coenzyme and as the energy source for the reaction. It is essential for DNA replication and repair of damaged DNA. In Rhodococcus jostii (strain RHA1), this protein is DNA ligase.